We begin with the raw amino-acid sequence, 395 residues long: Elongation factor Tu (395 aa).

The region spanning 10-204 (KPHVNIGTIG…AVDEYIPTPQ (195 aa)) is the tr-type G domain. A G1 region spans residues 19–26 (GHVDHGKT). 19–26 (GHVDHGKT) contributes to the GTP binding site. Threonine 26 contributes to the Mg(2+) binding site. The interval 60 to 64 (GITIS) is G2. The segment at 81-84 (DCPG) is G3. GTP is bound by residues 81–85 (DCPGH) and 136–139 (NKCD). A G4 region spans residues 136–139 (NKCD). The G5 stretch occupies residues 174–176 (SAL).

This sequence belongs to the TRAFAC class translation factor GTPase superfamily. Classic translation factor GTPase family. EF-Tu/EF-1A subfamily. Monomer.

It localises to the cytoplasm. It carries out the reaction GTP + H2O = GDP + phosphate + H(+). Functionally, GTP hydrolase that promotes the GTP-dependent binding of aminoacyl-tRNA to the A-site of ribosomes during protein biosynthesis. This is Elongation factor Tu from Geobacillus sp. (strain WCH70).